Reading from the N-terminus, the 419-residue chain is Inward rectifier potassium channel 16 (419 aa).

At 1 to 67 the chain is on the cytoplasmic side; it reads MSYYGSSYRI…MVDIFTTLVD (67 aa). Residues 68-94 traverse the membrane as a helical segment; sequence TKWRHMFVIFSLSYILSWLIFGSIFWL. At 95–117 the chain is on the extracellular side; that stretch reads IAFHHGDLLSDPDITPCVDNVHS. An intramembrane region (helical; Pore-forming) is located at residues 118-134; that stretch reads FTAAFLFSLETQTTIGY. Positions 131-136 match the Selectivity filter motif; sequence TIGYGY. The Extracellular portion of the chain corresponds to 135–143; that stretch reads GYRCVTEEC. Residues 144 to 171 form a helical membrane-spanning segment; the sequence is SVAVLTVILQSILSCIINTFIIGAALAK. The Cytoplasmic segment spans residues 172–419; the sequence is MATARKRAQT…LNRISMESQM (248 aa). Phosphoserine occurs at positions 358, 374, and 376.

Belongs to the inward rectifier-type potassium channel (TC 1.A.2.1) family. KCNJ16 subfamily. As to quaternary structure, it forms heteromeric channels with Kir4.1/KCNJ10; this interaction is required for KCNJ16 localization to the basolateral membrane in kidney cells. As a heteromer with KCNJ10, may interact with MAGI1; this interaction may facilitate KCNJ10/KCNJ16 potassium channel expression at the basolateral membrane in kidney cells. May form heteromers with Kir2.1/KCNJ2. Can form heteromeric channels with Kir4.2/KCNJ15. As to expression, abundantly expressed in the proximal and distal segments of the nephron.

Its subcellular location is the membrane. The protein resides in the basolateral cell membrane. The enzyme catalyses K(+)(in) = K(+)(out). Its activity is regulated as follows. Channel activity is strongly regulated by variations of cytosolic pH; channels are activated by alkaline and inhibited by acidic pH values. Activated by phosphatidylinositol 4,5 biphosphate (PtdIns(4,5)P2). Its function is as follows. Inward rectifier potassium channels are characterized by a greater tendency to allow potassium to flow into the cell rather than out of it. Their voltage dependence is regulated by the concentration of extracellular potassium; as external potassium is raised, the voltage range of the channel opening shifts to more positive voltages. The inward rectification is mainly due to the blockage of outward current by internal magnesium. KCNJ16 may be involved in the regulation of fluid and pH balance. In the kidney, together with KCNJ10, mediates basolateral K(+) recycling in distal tubules; this process is critical for Na(+) reabsorption at the tubules. The sequence is that of Inward rectifier potassium channel 16 (Kcnj16) from Mus musculus (Mouse).